The primary structure comprises 338 residues: Heat-inducible transcription repressor HrcA (338 aa).

This sequence belongs to the HrcA family.

Its function is as follows. Negative regulator of class I heat shock genes (grpE-dnaK-dnaJ and groELS operons). Prevents heat-shock induction of these operons. This is Heat-inducible transcription repressor HrcA from Thermotoga petrophila (strain ATCC BAA-488 / DSM 13995 / JCM 10881 / RKU-1).